The chain runs to 231 residues: Claudin-10 (231 aa).

Residues M1 to V21 traverse the membrane as a helical segment. The Extracellular portion of the chain corresponds to S22–R80. A helical membrane pass occupies residues G81–M101. The Cytoplasmic portion of the chain corresponds to K102 to K115. Residues I116–S136 traverse the membrane as a helical segment. Over L137–A160 the chain is Extracellular. Residues A161 to F181 form a helical membrane-spanning segment. Residues S182–V231 are Cytoplasmic-facing.

This sequence belongs to the claudin family. Can form homodimers both in trans (interaction between CLDN10 molecules in opposing membranes) and in cis (interaction between CLDN10 molecules within one membrane). Interacts with CLDN19. Widely expressed, with highest expression detected in brain cortex, kidney and lung. In kidney, the expression is highest in medulla, with transcripts being detected in medullary thick ascending limb of Henle's loop (mTAL) and outer and inner medullary collecting ducts. Expressed in salivary glands and skin. In terms of tissue distribution, detected in kidney with transcripts being detected in PCT, mTAL and cortical collecting duct. Detected in uterus. Expressed in proximal tubules (at protein level). As to expression, only detected in kidney and uterus. Detected in kidney with transcripts being detected in PCT, mTAL and cortical collecting duct. Detected in uterus. In terms of tissue distribution, expressed in the inner ear where it is detected in organ of Corti, marginal cells of stria vascularis, Reissner's membrane and spiral limbus (at protein level).

The protein resides in the cell junction. It is found in the tight junction. The protein localises to the cell membrane. Its subcellular location is the endoplasmic reticulum. It catalyses the reaction Na(+)(in) = Na(+)(out). It carries out the reaction Li(+)(in) = Li(+)(out). The catalysed reaction is K(+)(in) = K(+)(out). The enzyme catalyses Rb(+)(in) = Rb(+)(out). It catalyses the reaction Cs(+)(in) = Cs(+)(out). It carries out the reaction NH4(+)(in) = NH4(+)(out). The catalysed reaction is methylamine(out) = methylamine(in). The enzyme catalyses Mg(2+)(in) = Mg(2+)(out). It catalyses the reaction Ca(2+)(in) = Ca(2+)(out). It carries out the reaction Sr(2+)(in) = Sr(2+)(out). The catalysed reaction is chloride(in) = chloride(out). The enzyme catalyses nitrate(in) = nitrate(out). Its function is as follows. Forms paracellular channels: polymerizes in tight junction strands with cation- and anion-selective channels through the strands, conveying epithelial permeability in a process known as paracellular tight junction permeability. Forms cation-selective paracellular channels. In sweat glands and in the thick ascending limb (TAL) of Henle's loop in kidney, it controls paracellular sodium permeability which is essential for proper sweat production and renal function. In terms of biological role, forms anion-selective paracellular channels. In renal proximal tubules, it conveys selective chloride over hydrogencarbonate anion permeability which is required for renal chloride reabsorption and salt homeostasis. The chain is Claudin-10 from Mus musculus (Mouse).